A 940-amino-acid chain; its full sequence is Antiviral innate immune response receptor RIG-I (940 aa).

CARD domains lie at 1-87 (MTAE…GLCE) and 92-172 (WDFQ…KTLK). Residues K48, K96, K154, K164, K172, and K190 each participate in a glycyl lysine isopeptide (Lys-Gly) (interchain with G-Cter in ubiquitin) cross-link. Positions 219 to 928 (ENQNLSQNSC…LSFDAAEMAG (710 aa)) are interaction with ZC3HAV1. A Helicase ATP-binding domain is found at 249 to 428 (ALPAQNGKNT…AEATEYICKL (180 aa)). 262–269 (APTGCGKT) contributes to the ATP binding site. Positions 370 to 373 (DECH) match the DECH box motif. Positions 613–779 (KLRDLCFILQ…ILQTWDEAVF (167 aa)) constitute a Helicase C-terminal domain. Residues 738–928 (GSKCFLLTAN…LSFDAAEMAG (191 aa)) are mediates interaction with RNF135. Position 773 is a phosphothreonine; by CK2 (T773). The RLR CTR domain maps to 795–928 (DNQGKPEPVP…LSFDAAEMAG (134 aa)). C813 lines the Zn(2+) pocket. Residue K815 forms a Glycyl lysine isopeptide (Lys-Gly) (interchain with G-Cter in ubiquitin) linkage. C816 lines the Zn(2+) pocket. K861 carries the N6-acetyllysine modification. Zn(2+) is bound by residues C867 and C872. K912 bears the N6-acetyllysine mark.

Belongs to the helicase family. RLR subfamily. In terms of assembly, monomer; maintained as a monomer in an autoinhibited state. Upon binding of viral RNAs and conformational shift, homooligomerizes and forms filaments on these molecules. Interacts (via tandem CARD domain) with MAVS/IPS1 promoting its filamentation. Interacts with DHX58/LGP2, IKBKE, TBK1 and STING1. Interacts (via CARD domain) with TRIM25 (via SPRY domain). Interacts (double-stranded RNA-bound oligomeric form) with RNF135 (homodimer); involved in RNA length-dependent activation of the RIG-I signaling pathway. Interacts with CYLD. Interacts with NLRC5; blocks the interaction of MAVS/IPS1 to RIGI. Interacts with SRC. Interacts with DDX60. Interacts with ZC3HAV1 (via zinc-fingers) in an RNA-dependent manner. Interacts (via tandem CARD domain) with SEC14L1; the interaction is direct and impairs the interaction of RIGI with MAVS/IPS1. Interacts with VCP/p97; interaction is direct and allows the recruitment of RNF125 and subsequent ubiquitination and degradation. Interacts with NOP53; may regulate RIGI through USP15-mediated 'Lys-63'-linked deubiquitination. Interacts with SIGLEC10, CBL and PTPN11; within a negative feedback loop leading to RIGI degradation. Interacts with LRRC25. Interacts with ZCCHC3; leading to activation of RIGI. Interacts with RNF123. Interacts with UBE2D3 and UBE2N; E2 ubiquitin ligases involved in RNF135-mediated ubiquitination of RIGI and activation of the RIG-I signaling pathway. Interacts with IFIT3. Interacts with DDX3X. Interacts with RTN3. Interacts with ARL16; this interaction is GTP-dependent and induced upon viral infection; this interaction suppresses the RNA sensing activity of RIGI. Interacts with DHX16; this interaction enhances RIGI-mediated antiviral response. Interacts with IRGM; promoting RIGI degradation. Interacts with IFI6; this interaction inhibits RIGI activation. Interacts with ECSIT; this interaction bridges RIGI to the MAVS complex at the mitochondrion. Interacts with YWHAE; this interaction drives RIGI at the mitochondrion. In terms of processing, phosphorylated in resting cells and dephosphorylated in RNA virus-infected cells. Phosphorylation at Thr-773 results in inhibition of its activity while dephosphorylation at these sites results in its activation. ISGylated. Conjugated to ubiquitin-like protein ISG15 upon IFN-beta stimulation. ISGylation negatively regulates its function in antiviral signaling response. Post-translationally, sumoylated, probably by MUL1; inhibiting its polyubiquitination. In terms of processing, acetylated in response to RNA virus infection. Deacetylated by HDAC6 in the presence of viral mRNAs which is required for detection of viral RNA by RIGI. Ubiquitinated. 'Lys-63' ubiquitination by RNF135, which occurs after RNA-binding and homodimerization, releases the autoinhibition of the CARD domains by the RLR CTR domain, an essential step in the activation of the RIG-I signaling pathway. Also ubiquitinated by TRIM4. Also undergoes 'Lys-48' ubiquitination by RNF125 that leads to proteasomal degradation. 'Lys-48' ubiquitination follows viral infection and is enhanced by 'Lys-63'-linked ubiquitination of the CARD domains that promotes interaction with VCP/p97 and subsequent recruitment of RNF125. Within a negative feedback loop involving SIGLEC10 and PTPN11, 'Lys-48' ubiquitination at Lys-815 by CBL also elicits the proteasomal degradation of RIGI. Deubiquitinated by CYLD, a protease that selectively cleaves 'Lys-63'-linked ubiquitin chains. Also probably deubiquitinated by USP17L2/USP17 that cleaves 'Lys-48'- and 'Lys-63'-linked ubiquitin chains and positively regulates the receptor. Ubiquitinated by TRIM40 via 'Lys-48'-linked ubiquitination; leading to proteasomal degradation. Deubiquitinated by USP27X that cleaves 'Lys-63'-linked ubiquitin chains and inhibits the innate immune receptor activity. Deubiquitinated by USP3 that also cleaves 'Lys-63'-linked ubiquitin chains and inhibits the innate immune receptor activity. Post-translationally, degraded via selective autophagy following interaction with IRGM. IRGM promotes RIGI recruitment to autophagosome membranes, promoting its SQSTM1/p62-dependent autophagic degradation. Ubiquitously expressed, with highest levels in spleen, liver, intestine and heart. Up-regulated in tracheobronchial lymph node and tonsils during porcine reproductive and respiratory syndrome virus (PRRSV) infection.

The protein resides in the cytoplasm. The protein localises to the cell projection. It localises to the ruffle membrane. Its subcellular location is the cytoskeleton. It is found in the cell junction. The protein resides in the tight junction. The catalysed reaction is ATP + H2O = ADP + phosphate + H(+). Innate immune receptor that senses cytoplasmic viral nucleic acids and activates a downstream signaling cascade leading to the production of type I interferons and pro-inflammatory cytokines. Forms a ribonucleoprotein complex with viral RNAs on which it homooligomerizes to form filaments. The homooligomerization allows the recruitment of RNF135 an E3 ubiquitin-protein ligase that activates and amplifies the RIG-I-mediated antiviral signaling in an RNA length-dependent manner through ubiquitination-dependent and -independent mechanisms. Upon activation, associates with mitochondria antiviral signaling protein (MAVS/IPS1) that activates the IKK-related kinases TBK1 and IKBKE which in turn phosphorylate the interferon regulatory factors IRF3 and IRF7, activating transcription of antiviral immunological genes including the IFN-alpha and IFN-beta interferons. Ligands include: 5'-triphosphorylated ssRNA and dsRNA and short dsRNA (&lt;1 kb in length). In addition to the 5'-triphosphate moiety, blunt-end base pairing at the 5'-end of the RNA is very essential. Overhangs at the non-triphosphorylated end of the dsRNA RNA have no major impact on its activity. A 3'overhang at the 5'triphosphate end decreases and any 5'overhang at the 5' triphosphate end abolishes its activity. Detects both positive and negative strand RNA viruses including members of the families Paramyxoviridae, Rhabdoviridae: vesicular stomatitis virus (VSV) Orthomyxoviridae: influenza A and B virus, Flaviviridae: Japanese encephalitis virus (JEV). It also detects rotavirus and reovirus. Also involved in antiviral signaling in response to viruses containing a dsDNA genome. Detects dsRNA produced from non-self dsDNA by RNA polymerase III. May play important roles in granulocyte production and differentiation, bacterial phagocytosis and in the regulation of cell migration. This Sus scrofa (Pig) protein is Antiviral innate immune response receptor RIG-I.